The sequence spans 79 residues: Cytochrome b (79 aa).

Transmembrane regions (helical) follow at residues 1–7, 31–52, and 67–79; these read TALLLAM, WLIR…YLHI, and WNIG…TLMA. Heme b is bound by residues His-37 and His-51.

Belongs to the cytochrome b family. In terms of assembly, the cytochrome bc1 complex contains 11 subunits: 3 respiratory subunits (MT-CYB, CYC1 and UQCRFS1), 2 core proteins (UQCRC1 and UQCRC2) and 6 low-molecular weight proteins (UQCRH/QCR6, UQCRB/QCR7, UQCRQ/QCR8, UQCR10/QCR9, UQCR11/QCR10 and a cleavage product of UQCRFS1). This cytochrome bc1 complex then forms a dimer. Requires heme b as cofactor.

The protein localises to the mitochondrion inner membrane. Component of the ubiquinol-cytochrome c reductase complex (complex III or cytochrome b-c1 complex) that is part of the mitochondrial respiratory chain. The b-c1 complex mediates electron transfer from ubiquinol to cytochrome c. Contributes to the generation of a proton gradient across the mitochondrial membrane that is then used for ATP synthesis. This is Cytochrome b (MT-CYB) from Corcorax melanoramphos (White-winged chough).